A 793-amino-acid chain; its full sequence is ABC transporter G family member 1 (793 aa).

The segment covering Met-1–Ser-20 has biased composition (low complexity). A disordered region spans residues Met-1–Asn-96. Basic and acidic residues predominate over residues Ser-21 to Glu-37. The segment covering Glu-59–Asp-68 has biased composition (polar residues). Residues Leu-67–Asn-102 adopt a coiled-coil conformation. The segment covering Asn-69–Asn-96 has biased composition (low complexity). The ABC transporter domain maps to Val-123 to Glu-364. Gly-156–Thr-163 lines the ATP pocket. Over residues Asp-382–Ile-398 the composition is skewed to acidic residues. The interval Asp-382–Arg-457 is disordered. Gly residues predominate over residues Gly-399–Glu-413. Residues Pro-421–Lys-437 show a composition bias toward polar residues. A compositionally biased stretch (low complexity) spans Gln-438–Gln-448. In terms of domain architecture, ABC transmembrane type-2 spans Met-527–Lys-785. 7 helical membrane-spanning segments follow: residues Leu-533–Gly-553, Val-563–Phe-583, Phe-610–Met-630, Phe-647–Ser-667, Val-674–Ile-694, Gly-701–Ile-721, and Val-764–Leu-784.

Belongs to the ABC transporter superfamily. ABCG family.

The protein resides in the membrane. This Dictyostelium discoideum (Social amoeba) protein is ABC transporter G family member 1 (abcG1).